Consider the following 470-residue polypeptide: MNKLVSLAKRRGFIFPSSEIYGGLSSCFDYGPLGSEMKKNIKDLWWNAMTRRHQNIVGIDASIMMNPTVWEASGHVASFNDPMIDDKTTKRRYRADHLIENHIEKLHRDGKEAEAAAIKVAYEAAGGTEDPNRTLYNIIIEAGIKAPDTGSADWTEVRQFNLMFQCNMGAVADSAGVVYLRPETAQGIFVNFHNVREASRMKVPFGIAQIGKAFRNEIVKGNFIFRMVEFEQMEMQYFVKPGTQLEAFEAWREERFRWYSETLGMSKEKLHWYKHDKLAHYADLAYDIKFEFPFGIEEIEGIHSRTDFDLSQHQKYSGKSMEYIDQTTNERYIPYVVETSSGCDRTFLALLSDAYQEDVVDGEPRVMLKLAPKVAPVKAAVLPLMKKGEMGEKAAQLCRDLSESFMVQYDDAASIGKRYRRQDEIGTPFCFTVDHDTLENGTITVRYRDTAAQERINMSKAAEFLATKLM.

Residues R94 and E183 each coordinate substrate. ATP-binding positions include 215–217, 225–230, 298–299, and 342–345; these read RNE, FRMVEF, EI, and GCDR. 230 to 234 is a binding site for substrate; it reads FEQME. 338–342 contributes to the substrate binding site; it reads ETSSG.

Belongs to the class-II aminoacyl-tRNA synthetase family. Homodimer.

It is found in the cytoplasm. The enzyme catalyses tRNA(Gly) + glycine + ATP = glycyl-tRNA(Gly) + AMP + diphosphate. Functionally, catalyzes the attachment of glycine to tRNA(Gly). The polypeptide is Glycine--tRNA ligase (Chlorobaculum tepidum (strain ATCC 49652 / DSM 12025 / NBRC 103806 / TLS) (Chlorobium tepidum)).